The chain runs to 935 residues: Dual 3',5'-cyclic-AMP and -GMP phosphodiesterase 11A (935 aa).

The disordered stretch occupies residues 41–125 (RHSSGQGASD…ASQKELRKSF (85 aa)). The segment covering 54 to 69 (ALAGASSLAQSSARGS) has biased composition (low complexity). 3 positions are modified to phosphoserine: S162, S163, and S239. 2 consecutive GAF domains span residues 217–370 (DLTS…GIAI) and 402–558 (DLEK…GLGI). S424 provides a ligand contact to 3',5'-cyclic GMP. The region spanning 588 to 912 (SKAEVDKFKA…RKWEELHQKR (325 aa)) is the PDEase domain. Residue H664 is the Proton donor of the active site. Positions 668, 704, 705, and 816 each coordinate a divalent metal cation. Positions 915 to 935 (VSAASPVPSSPSPAVAGEDRL) are disordered.

It belongs to the cyclic nucleotide phosphodiesterase family. A divalent metal cation serves as cofactor. Isoform 1 is expressed in brain, heart, kidney and liver, but not in prostate. Isoform 2 is specifically expressed in testis. Isoform 3 is expressed in various tissues including brain, lung, skeletal muscle, spleen, testis and prostate.

The protein resides in the cytoplasm. It is found in the cytosol. The enzyme catalyses 3',5'-cyclic GMP + H2O = GMP + H(+). It carries out the reaction 3',5'-cyclic AMP + H2O = AMP + H(+). With respect to regulation, inhibited by 3-isobutyl-1-methylxanthine (IBMX), zaprinast and dipyridamole. cGMP acts as an allosteric activator. In terms of biological role, plays a role in signal transduction by regulating the intracellular concentration of cyclic nucleotides cAMP and cGMP. Catalyzes the hydrolysis of both cAMP and cGMP to 5'-AMP and 5'-GMP, respectively. This chain is Dual 3',5'-cyclic-AMP and -GMP phosphodiesterase 11A, found in Rattus norvegicus (Rat).